Consider the following 168-residue polypeptide: Cilia- and flagella-associated protein 276 (168 aa).

Disordered regions lie at residues 35-61 (AHLA…RDTF) and 149-168 (HTAA…FFST). A compositionally biased stretch (polar residues) spans 38-55 (AQQQDPWSRLSSTPTATS).

As to quaternary structure, microtubule inner protein component of sperm flagellar doublet microtubules. In terms of tissue distribution, predominantly expressed in nervous system tissues, such as the spinal cord, cerebrum, cerebellum, and sciatic nerve.

Its subcellular location is the cytoplasm. It is found in the cytoskeleton. It localises to the cilium axoneme. The protein localises to the flagellum axoneme. In terms of biological role, microtubule inner protein (MIP) part of the dynein-decorated doublet microtubules (DMTs) in cilia axoneme, which is required for motile cilia beating. May play an important role for the maintenance of myelin-axon integrity. May affect intracellular Ca(2+) homeostasis. The chain is Cilia- and flagella-associated protein 276 from Mus musculus (Mouse).